The chain runs to 500 residues: Inner membrane transporter YjeM (500 aa).

Residues 1-7 lie on the Cytoplasmic side of the membrane; that stretch reads MPHTIKK. Residues 8 to 28 form a helical membrane-spanning segment; sequence MSLIGLILMIFTSVFGFANSP. The Periplasmic segment spans residues 29 to 37; it reads SAYYLMGYS. The helical transmembrane segment at 38 to 58 threads the bilayer; that stretch reads AIPFYIFSALLFFIPFALMMA. Topologically, residues 59–82 are cytoplasmic; it reads EMGAAYRKEEGGIYSWMNNSVGPR. Residues 83 to 103 form a helical membrane-spanning segment; it reads FAFIGTFMWFSSYIIWMVSTS. At 104 to 132 the chain is on the periplasmic side; the sequence is AKVWVPFSTFLYGSDMTQHWRIAGLEPTQ. Residues 133–153 form a helical membrane-spanning segment; it reads VVGLLAVAWMILVTVVASKGI. Residues 154 to 163 lie on the Cytoplasmic side of the membrane; that stretch reads NKIARITAVG. A helical membrane pass occupies residues 164–184; sequence GIAVMCLNLVLLLVSITILLL. Topologically, residues 185–209 are periplasmic; sequence NGGHFAQDINFLASPNPGYQSGLAM. Residues 210–230 form a helical membrane-spanning segment; the sequence is LSFVVFAIFAYGGIEAVGGLV. At 231–243 the chain is on the cytoplasmic side; sequence DKTENPEKNFAKG. A helical transmembrane segment spans residues 244-264; it reads IVFAAIVISIGYSLAIFLWGV. The Periplasmic portion of the chain corresponds to 265–319; it reads STNWQQVLSNGSVNLGNITYVLMKSLGMTLGNALHLSPEASLSLGVWFARITGLS. The helical transmembrane segment at 320–340 threads the bilayer; sequence MFLAYTGAFFTLCYSPLKAII. The Cytoplasmic segment spans residues 341 to 369; the sequence is QGTPKALWPEPMTRLNAMGMPSIAMWMQC. Residues 370–390 form a helical membrane-spanning segment; sequence GLVTVFILLVSFGGGTASAFF. Residues 391–394 are Periplasmic-facing; sequence NKLT. A helical membrane pass occupies residues 395 to 415; sequence LMANVSMTLPYLFLALAFPFF. At 416-433 the chain is on the cytoplasmic side; that stretch reads KARQDLDRPFVIFKTHLS. A helical transmembrane segment spans residues 434–454; it reads AMIATVVVVLVVTFANVFTII. At 455-462 the chain is on the periplasmic side; it reads QPVVEAGD. Residues 463 to 483 form a helical membrane-spanning segment; the sequence is WDSTLWMIGGPVFFSLLAMAI. At 484-500 the chain is on the cytoplasmic side; sequence YQNYCSRVAKNPQWAVE.

This sequence belongs to the amino acid-polyamine-organocation (APC) superfamily.

Its subcellular location is the cell inner membrane. In Escherichia coli (strain K12), this protein is Inner membrane transporter YjeM (yjeM).